Consider the following 194-residue polypeptide: MRMWELLPSKIKYGISTIISIIVFLFFLEFLGQPVLKSVSYTITTITILAFIFGKYLWKYFYIDYLKHKFCPDFNGRWIGKIESNYSGGTKVEFPLEIKADFFSIKMKGNTTIGRTYSNYCKVVRAEDDSFELVYMFKVFNDTPSITDTSFYEGAARLRVIDIKTMNMKGVFWTNRCWENGKNTAGIIELSKEV.

The tract at residues 1 to 73 is required for cell toxicity; sequence MRMWELLPSK…DYLKHKFCPD (73 aa). The next 2 membrane-spanning stretches (helical) occupy residues 15-35 and 43-63; these read ISTIISIIVFLFFLEFLGQPV and ITTITILAFIFGKYLWKYFYI.

Belongs to the CBASS Cap15 membrane effector family. In terms of assembly, the beta barrel domain oligomerizes; in the presence of cyclic nucleotides (probably 3',3'-cGAMP, but the cognate CD-NTase makes at least 4 other cyclic nucleotides) higher-level oligomers are detected.

The protein localises to the cell inner membrane. Its function is as follows. Effector protein of a CBASS antivirus system. CBASS (cyclic oligonucleotide-based antiphage signaling system) provides immunity against bacteriophages. The CD-NTase protein (CdnB) synthesizes cyclic nucleotides in response to infection; these serve as specific second messenger signals. The signals activate a diverse range of effectors, leading to bacterial cell death and thus abortive phage infection. Causes cell death in response to 3',3'-cGAMP upon coexpression in E.coli with V.cholerae DncV; inactivating DncV prevents cell death. Upon induction in E.coli with non-cognate DncV, the cell inner membrane shrinks and separates from the cell wall with a concomitant increase in the periplasm. Binds cyclic nucleotide second messenger 3',3'-cGAMP, probably oligomerizing, and induces cell membrane shrinkage and rupture, leading to cell death. A type I CBASS system. Protects E.coli against phage infection. When the CBASS operon (cdnB-cap15) is introduced in E.coli MG1655 there is about 100-fold protection against phage T2 and about 10-fold protection against phage T5 and T6. This chain is CD-NTase-associated protein 15, found in Escherichia albertii.